The sequence spans 572 residues: 2-succinyl-5-enolpyruvyl-6-hydroxy-3-cyclohexene-1-carboxylate synthase (572 aa).

It belongs to the TPP enzyme family. MenD subfamily. As to quaternary structure, homodimer. The cofactor is Mg(2+). Mn(2+) serves as cofactor. It depends on thiamine diphosphate as a cofactor.

The catalysed reaction is isochorismate + 2-oxoglutarate + H(+) = 5-enolpyruvoyl-6-hydroxy-2-succinyl-cyclohex-3-ene-1-carboxylate + CO2. Its pathway is quinol/quinone metabolism; 1,4-dihydroxy-2-naphthoate biosynthesis; 1,4-dihydroxy-2-naphthoate from chorismate: step 2/7. It functions in the pathway quinol/quinone metabolism; menaquinone biosynthesis. Functionally, catalyzes the thiamine diphosphate-dependent decarboxylation of 2-oxoglutarate and the subsequent addition of the resulting succinic semialdehyde-thiamine pyrophosphate anion to isochorismate to yield 2-succinyl-5-enolpyruvyl-6-hydroxy-3-cyclohexene-1-carboxylate (SEPHCHC). This is 2-succinyl-5-enolpyruvyl-6-hydroxy-3-cyclohexene-1-carboxylate synthase from Vibrio campbellii (strain ATCC BAA-1116).